The primary structure comprises 598 residues: Peroxisomal multifunctional enzyme type 2 (598 aa).

The (3R)-hydroxyacyl-CoA dehydrogenase stretch occupies residues 1–309; sequence MSSSDGKLRY…LEVLEKLKEG (309 aa). Residues 16-40, Leu24, Asp43, 78-79, and Asn102 contribute to the NAD(+) site; these read VVTGAGAGLGREYALLFAERGAKVV and SV. Residue Ser154 participates in substrate binding. The Proton acceptor role is filled by Tyr167. NAD(+)-binding positions include 167–171 and 199–202; these read YTAAK and AASR. The segment at 310–598 is enoyl-CoA hydratase 2; that stretch reads GGDAIEDAFE…VDLKSSQAKL (289 aa). Residues 390 to 391, Lys419, 496 to 501, Gly519, and Phe549 contribute to the (3R)-3-hydroxydecanoyl-CoA site; these read HG and DKNPLH. A MaoC-like domain is found at 469–586; that stretch reads PAPNRQPDAT…VETGKEVISG (118 aa). The Microbody targeting signal motif lies at 596–598; it reads AKL.

It belongs to the short-chain dehydrogenases/reductases (SDR) family. Homodimer.

The protein resides in the peroxisome. The enzyme catalyses a (3R)-3-hydroxyacyl-CoA + NAD(+) = a 3-oxoacyl-CoA + NADH + H(+). It catalyses the reaction a (3R)-3-hydroxyacyl-CoA = a (2E)-enoyl-CoA + H2O. It functions in the pathway lipid metabolism; fatty acid beta-oxidation. Its function is as follows. Bifunctional enzyme acting on the peroxisomal beta-oxidation pathway for fatty acids. In Drosophila melanogaster (Fruit fly), this protein is Peroxisomal multifunctional enzyme type 2.